The primary structure comprises 505 residues: RNA-splicing ligase RtcB homolog (505 aa).

Mn(2+)-binding residues include Asp-119, Cys-122, His-227, and His-259. 226 to 230 lines the GMP pocket; it reads NHYAE. Ser-300 is subject to Phosphoserine. His-353 provides a ligand contact to Mn(2+). GMP is bound by residues 353–354, 402–405, Ser-409, and 428–431; these read HN, GGTM, and HGAG. Residue His-428 is the GMP-histidine intermediate of the active site. Lys-496 participates in a covalent cross-link: Glycyl lysine isopeptide (Lys-Gly) (interchain with G-Cter in SUMO2). Lys-504 is a GMP binding site.

The protein belongs to the RtcB family. In terms of assembly, catalytic component of the tRNA-splicing ligase complex. Mn(2+) serves as cofactor.

It localises to the nucleus. The protein localises to the cytoplasm. The enzyme catalyses a 3'-end 3'-phospho-ribonucleotide-RNA + a 5'-end dephospho-ribonucleoside-RNA + GTP = a ribonucleotidyl-ribonucleotide-RNA + GMP + diphosphate. It catalyses the reaction a 3'-end 2',3'-cyclophospho-ribonucleotide-RNA + a 5'-end dephospho-ribonucleoside-RNA + GTP + H2O = a ribonucleotidyl-ribonucleotide-RNA + GMP + diphosphate + H(+). In terms of biological role, catalytic subunit of the tRNA-splicing ligase complex that acts by directly joining spliced tRNA halves to mature-sized tRNAs by incorporating the precursor-derived splice junction phosphate into the mature tRNA as a canonical 3',5'-phosphodiester. May act as an RNA ligase with broad substrate specificity, and may function toward other RNAs. The sequence is that of RNA-splicing ligase RtcB homolog from Rattus norvegicus (Rat).